Consider the following 124-residue polypeptide: Small ribosomal subunit protein uS12 (124 aa).

At Asp89 the chain carries 3-methylthioaspartic acid. The disordered stretch occupies residues 103–124; it reads DTAGVKDRRQGRSKYGAKRPKD. Residues 113–124 show a composition bias toward basic residues; it reads GRSKYGAKRPKD.

The protein belongs to the universal ribosomal protein uS12 family. As to quaternary structure, part of the 30S ribosomal subunit. Contacts proteins S8 and S17. May interact with IF1 in the 30S initiation complex.

Functionally, with S4 and S5 plays an important role in translational accuracy. Interacts with and stabilizes bases of the 16S rRNA that are involved in tRNA selection in the A site and with the mRNA backbone. Located at the interface of the 30S and 50S subunits, it traverses the body of the 30S subunit contacting proteins on the other side and probably holding the rRNA structure together. The combined cluster of proteins S8, S12 and S17 appears to hold together the shoulder and platform of the 30S subunit. The protein is Small ribosomal subunit protein uS12 of Acaryochloris marina (strain MBIC 11017).